The following is a 190-amino-acid chain: Secretory phospholipase A2 (190 aa).

A signal peptide spans 1–15 (MKLAYFSSLLPLALA). Cys-62 and Cys-78 are joined by a disulfide. A Ca(2+)-binding site is contributed by Ala-65. Residue His-81 is part of the active site. Asp-82 is a binding site for Ca(2+).

It belongs to the phospholipase A2 family. Requires Ca(2+) as cofactor.

The protein localises to the lipid droplet. It is found in the secreted. It catalyses the reaction a 1,2-diacyl-sn-glycero-3-phosphocholine + H2O = a 1-acyl-sn-glycero-3-phosphocholine + a fatty acid + H(+). In terms of biological role, secretory phospholipase that catalyzes the calcium-dependent hydrolysis of the 2-acyl groups in 3-sn-phosphoglycerides. Increases the ability to utilize insect-derived nutrients and lipids, and promotes lipid dropplets accumulation. Plays a role in virulence, including more efficient penetration of the insect cuticle and evasion of host immune response by repressing the expression of host immunity genes. The protein is Secretory phospholipase A2 of Beauveria bassiana (strain ARSEF 2860) (White muscardine disease fungus).